Reading from the N-terminus, the 239-residue chain is Probable transcriptional regulatory protein BLi00754/BL02339 (239 aa).

It belongs to the TACO1 family. YeeN subfamily.

The protein resides in the cytoplasm. This is Probable transcriptional regulatory protein BLi00754/BL02339 from Bacillus licheniformis (strain ATCC 14580 / DSM 13 / JCM 2505 / CCUG 7422 / NBRC 12200 / NCIMB 9375 / NCTC 10341 / NRRL NRS-1264 / Gibson 46).